The primary structure comprises 284 residues: D-tagatose-1,6-bisphosphate aldolase subunit GatY (284 aa).

Residue D82 is the Proton donor of the active site. Zn(2+)-binding residues include H83 and H180. Residue G181 participates in dihydroxyacetone phosphate binding. Residue H208 coordinates Zn(2+). Dihydroxyacetone phosphate-binding positions include 209–211 and 230–233; these read GAS and NVAT.

The protein belongs to the class II fructose-bisphosphate aldolase family. TagBP aldolase GatY subfamily. As to quaternary structure, forms a complex with GatZ. The cofactor is Zn(2+).

It carries out the reaction D-tagatofuranose 1,6-bisphosphate = D-glyceraldehyde 3-phosphate + dihydroxyacetone phosphate. The protein operates within carbohydrate metabolism; D-tagatose 6-phosphate degradation; D-glyceraldehyde 3-phosphate and glycerone phosphate from D-tagatose 6-phosphate: step 2/2. Catalytic subunit of the tagatose-1,6-bisphosphate aldolase GatYZ, which catalyzes the reversible aldol condensation of dihydroxyacetone phosphate (DHAP or glycerone-phosphate) with glyceraldehyde 3-phosphate (G3P) to produce tagatose 1,6-bisphosphate (TBP). Requires GatZ subunit for full activity and stability. Is involved in the catabolism of galactitol and D-tagatose. The protein is D-tagatose-1,6-bisphosphate aldolase subunit GatY (gatY) of Klebsiella oxytoca.